Reading from the N-terminus, the 77-residue chain is Small ribosomal subunit protein bS21 (77 aa).

The protein belongs to the bacterial ribosomal protein bS21 family.

This is Small ribosomal subunit protein bS21 from Bartonella tribocorum (strain CIP 105476 / IBS 506).